The sequence spans 504 residues: ATP synthase subunit alpha (504 aa).

ATP is bound at residue 169–176 (GDRKTGKT).

It belongs to the ATPase alpha/beta chains family. In terms of assembly, F-type ATPases have 2 components, CF(1) - the catalytic core - and CF(0) - the membrane proton channel. CF(1) has five subunits: alpha(3), beta(3), gamma(1), delta(1), epsilon(1). CF(0) has three main subunits: a(1), b(2) and c(9-12). The alpha and beta chains form an alternating ring which encloses part of the gamma chain. CF(1) is attached to CF(0) by a central stalk formed by the gamma and epsilon chains, while a peripheral stalk is formed by the delta and b chains.

It localises to the cell membrane. It carries out the reaction ATP + H2O + 4 H(+)(in) = ADP + phosphate + 5 H(+)(out). Produces ATP from ADP in the presence of a proton gradient across the membrane. The alpha chain is a regulatory subunit. In Lactiplantibacillus plantarum (strain ATCC BAA-793 / NCIMB 8826 / WCFS1) (Lactobacillus plantarum), this protein is ATP synthase subunit alpha.